Here is a 420-residue protein sequence, read N- to C-terminus: UDP-N-acetylmuramoylalanine--D-glutamate ligase (420 aa).

109 to 115 (GSAGKTT) serves as a coordination point for ATP.

Belongs to the MurCDEF family.

The protein localises to the cytoplasm. The enzyme catalyses UDP-N-acetyl-alpha-D-muramoyl-L-alanine + D-glutamate + ATP = UDP-N-acetyl-alpha-D-muramoyl-L-alanyl-D-glutamate + ADP + phosphate + H(+). The protein operates within cell wall biogenesis; peptidoglycan biosynthesis. Cell wall formation. Catalyzes the addition of glutamate to the nucleotide precursor UDP-N-acetylmuramoyl-L-alanine (UMA). The sequence is that of UDP-N-acetylmuramoylalanine--D-glutamate ligase from Chlamydia abortus (strain DSM 27085 / S26/3) (Chlamydophila abortus).